A 304-amino-acid chain; its full sequence is HTH-type transcriptional activator CmpR (304 aa).

The 61-residue stretch at 1–61 (MKNATLHQFE…EQIGRKIYLT (61 aa)) folds into the HTH lysR-type domain. The segment at residues 21–40 (FTKAAEELFLTQPTVSQQMK) is a DNA-binding region (H-T-H motif).

It belongs to the LysR transcriptional regulatory family.

It localises to the cytoplasm. In terms of biological role, activates transcription of the cmpABCD operon under carbon dioxide-limited conditions. Specifically binds to the cmpR-cmpA intergenic region. The chain is HTH-type transcriptional activator CmpR (cmpR) from Synechocystis sp. (strain ATCC 27184 / PCC 6803 / Kazusa).